Here is a 429-residue protein sequence, read N- to C-terminus: MKKQRNLRSMAAQAVEQVVEQGQSLSNILPPLQQKVSDKDKALLQELCFGVLRTLSQLDWLINKLMARPMTGKQRTVHYLIMVGLYQLLYTRIPPHAALAETVEGAIAIKRPQLKGLINGVLRQFQRQQEELLAEFNASDARYLHPSWLLKRLQKAYPEQWQSIVEANNQRPPMWLRVNRTHHSRDSWLALLDEAGMKGFPHADYPDAVRLETPAPVHALPGFEDGWVTVQDASAQGCMTWLAPQNGEHILDLCAAPGGKTTHILEVAPEAQVVAVDIDEQRLSRVYDNLKRLGMKATVKQGDGRYPSQWCGEQQFDRILLDAPCSATGVIRRHPDIKWLRRDRDIPELAQLQSEILDAIWPHLKSGGTLVYATCSVLPEENSLQIKAFLQRTADAELCETGTPEQPGKQNLPGAEEGDGFFYAKLIKK.

S-adenosyl-L-methionine-binding positions include Cys-254 to Lys-260, Asp-277, Asp-303, and Asp-322. Cys-375 serves as the catalytic Nucleophile.

Belongs to the class I-like SAM-binding methyltransferase superfamily. RsmB/NOP family.

The protein localises to the cytoplasm. The enzyme catalyses cytidine(967) in 16S rRNA + S-adenosyl-L-methionine = 5-methylcytidine(967) in 16S rRNA + S-adenosyl-L-homocysteine + H(+). Functionally, specifically methylates the cytosine at position 967 (m5C967) of 16S rRNA. The sequence is that of Ribosomal RNA small subunit methyltransferase B from Escherichia coli (strain SE11).